The following is a 466-amino-acid chain: A-type ATP synthase subunit B (466 aa).

The protein belongs to the ATPase alpha/beta chains family. Has multiple subunits with at least A(3), B(3), C, D, E, F, H, I and proteolipid K(x).

It localises to the cell membrane. Functionally, component of the A-type ATP synthase that produces ATP from ADP in the presence of a proton gradient across the membrane. The B chain is a regulatory subunit. The polypeptide is A-type ATP synthase subunit B (Sulfolobus acidocaldarius (strain ATCC 33909 / DSM 639 / JCM 8929 / NBRC 15157 / NCIMB 11770)).